Reading from the N-terminus, the 276-residue chain is Kallikrein-11 (276 aa).

Residues 1–44 (MRRLKSDWKLSTETREPGARPALLQARMILRLIALALVTGHVGG) form the signal peptide. A propeptide spans 45–47 (ETR) (activation peptide). Residues 48–274 (IIKGYECRPH…YFNWIHEVMR (227 aa)) enclose the Peptidase S1 domain. 5 disulfides stabilise this stretch: Cys54-Cys189, Cys73-Cys89, Cys168-Cys235, Cys200-Cys214, and Cys225-Cys250. The active-site Charge relay system is His88. N-linked (GlcNAc...) asparagine glycosylation occurs at Asn125. Residue Asp136 is the Charge relay system of the active site. Residues Asn191 and Asn207 are each glycosylated (N-linked (GlcNAc...) asparagine). The Charge relay system role is filled by Ser229. The N-linked (GlcNAc...) asparagine glycan is linked to Asn236.

The protein belongs to the peptidase S1 family. Kallikrein subfamily. As to expression, expressed in brain and prostate (isoform 1) and prostate (isoform 2).

The protein localises to the secreted. Functionally, possible multifunctional protease. Efficiently cleaves 'bz-Phe-Arg-4-methylcoumaryl-7-amide', a kallikrein substrate, and weakly cleaves other substrates for kallikrein and trypsin. The sequence is that of Kallikrein-11 (Klk11) from Mus musculus (Mouse).